The following is a 164-amino-acid chain: ATP synthase subunit b 1 (164 aa).

The chain crosses the membrane as a helical span at residues 4–24 (MELAELWVAVAFFVFVGILLY).

The protein belongs to the ATPase B chain family. In terms of assembly, F-type ATPases have 2 components, F(1) - the catalytic core - and F(0) - the membrane proton channel. F(1) has five subunits: alpha(3), beta(3), gamma(1), delta(1), epsilon(1). F(0) has three main subunits: a(1), b(2) and c(10-14). The alpha and beta chains form an alternating ring which encloses part of the gamma chain. F(1) is attached to F(0) by a central stalk formed by the gamma and epsilon chains, while a peripheral stalk is formed by the delta and b chains.

The protein resides in the cell inner membrane. Functionally, f(1)F(0) ATP synthase produces ATP from ADP in the presence of a proton or sodium gradient. F-type ATPases consist of two structural domains, F(1) containing the extramembraneous catalytic core and F(0) containing the membrane proton channel, linked together by a central stalk and a peripheral stalk. During catalysis, ATP synthesis in the catalytic domain of F(1) is coupled via a rotary mechanism of the central stalk subunits to proton translocation. Its function is as follows. Component of the F(0) channel, it forms part of the peripheral stalk, linking F(1) to F(0). The sequence is that of ATP synthase subunit b 1 from Azorhizobium caulinodans (strain ATCC 43989 / DSM 5975 / JCM 20966 / LMG 6465 / NBRC 14845 / NCIMB 13405 / ORS 571).